A 1040-amino-acid polypeptide reads, in one-letter code: Multidrug resistance protein MdtB (1040 aa).

12 helical membrane passes run 16 to 36 (FIMR…AGII), 347 to 367 (LMMA…NIPA), 369 to 389 (IIPG…MVFL), 396 to 416 (LTLM…IVVI), 440 to 460 (IGFT…PLLF), 472 to 492 (FAIT…TLTP), 537 to 557 (WLTL…WVFI), 863 to 883 (LGST…VLGI), 888 to 908 (FIHP…ALLA), 911 to 931 (IAGS…IGIV), 968 to 988 (ILMT…STGV), and 998 to 1018 (IGMV…TPVI).

This sequence belongs to the resistance-nodulation-cell division (RND) (TC 2.A.6) family. MdtB subfamily. Part of a tripartite efflux system composed of MdtA, MdtB and MdtC. MdtB forms a heteromultimer with MdtC.

The protein localises to the cell inner membrane. The MdtABC tripartite complex confers resistance against novobiocin and deoxycholate. The polypeptide is Multidrug resistance protein MdtB (Escherichia coli O81 (strain ED1a)).